The primary structure comprises 198 residues: Na(+)-translocating NADH-quinone reductase subunit E (198 aa).

The next 6 helical transmembrane spans lie at 11-31 (AVFV…FLAV), 35-55 (VSTA…SVPA), 77-97 (FLNF…LEMI), 109-129 (LGIF…VSFM), 140-160 (IVYG…LAGI), and 176-196 (LGIT…FAGV).

This sequence belongs to the NqrDE/RnfAE family. Composed of six subunits; NqrA, NqrB, NqrC, NqrD, NqrE and NqrF.

It localises to the cell inner membrane. It catalyses the reaction a ubiquinone + n Na(+)(in) + NADH + H(+) = a ubiquinol + n Na(+)(out) + NAD(+). Functionally, NQR complex catalyzes the reduction of ubiquinone-1 to ubiquinol by two successive reactions, coupled with the transport of Na(+) ions from the cytoplasm to the periplasm. NqrA to NqrE are probably involved in the second step, the conversion of ubisemiquinone to ubiquinol. The sequence is that of Na(+)-translocating NADH-quinone reductase subunit E from Yersinia pestis bv. Antiqua (strain Nepal516).